A 517-amino-acid polypeptide reads, in one-letter code: MDPAGAADPSVPPNPLTHLSLQDRSEMQLQSEADRRSLPGTWTRSSPEHTTILRGGVRRCLQQQCEQTVRILHAKVAQKSYGNEKRFFCPPPCVYLSGPGWRVKPGQDQAHQAGETGPTVCGYMGLDSASGSATETQKLNFEQQPDSREFGCAKTLYISDADKRKHFRLVLRLVLRGGRELGTFHSRLIKVISKPSQKKQSLKNTDLCISSGSKVSLFNRLRSQTVSTRYLSVEDGAFVASARQWAAFTLHLADGHSAQGDFPPREGYVRYGSLVQLVCTVTGITLPPMIIRKVAKQCALLDVDEPISQLHKCAFQFPGSPPGGGGTYLCLATEKVVQFQASPCPKEANRALLNDSSCWTIIGTESVEFSFSTSLACTLEPVTPVPLISTLELSGGGDVATLELHGENFHAGLKVWFGDVEAETMYRSPRSLVCVVPDVAAFCSDWRWLRAPITIPMSLVRADGLFYPSAFSFTYTPEYSVRPGHPGVPEPATDADALLESIHQEFTRTNFHLFIQT.

Residues 26-37 show a composition bias toward basic and acidic residues; that stretch reads EMQLQSEADRRS. The tract at residues 26-48 is disordered; it reads EMQLQSEADRRSLPGTWTRSSPE. DNA-binding regions lie at residues 78–88, 193–198, and 220–225; these read QKSYGNEKRFF, SKPSQK, and RLRSQT. An IPT/TIG domain is found at 387 to 512; it reads LISTLELSGG…HQEFTRTNFH (126 aa).

Belongs to the Su(H) family. In terms of assembly, interacts weakly with EBNA2. Does not interact with any Notch proteins.

The protein localises to the nucleus. In terms of biological role, putative transcription factor, which cooperates with EBNA2 to activate transcription. The chain is Recombining binding protein suppressor of hairless-like protein (RBPJL) from Homo sapiens (Human).